The sequence spans 260 residues: Alpha-acetolactate decarboxylase (260 aa).

Belongs to the alpha-acetolactate decarboxylase family.

It carries out the reaction (2S)-2-acetolactate + H(+) = (R)-acetoin + CO2. Its pathway is polyol metabolism; (R,R)-butane-2,3-diol biosynthesis; (R,R)-butane-2,3-diol from pyruvate: step 2/3. Converts acetolactate into acetoin, which can be excreted by the cells. This may be a mechanism for controlling the internal pH of cells in the stationary stage. In Klebsiella aerogenes (Enterobacter aerogenes), this protein is Alpha-acetolactate decarboxylase (budA).